Here is a 375-residue protein sequence, read N- to C-terminus: Alanine racemase, catabolic (375 aa).

Lysine 38 acts as the Proton acceptor; specific for D-alanine in catalysis. The residue at position 38 (lysine 38) is an N6-(pyridoxal phosphate)lysine. Catalysis depends on tyrosine 269, which acts as the Proton acceptor; specific for L-alanine.

Belongs to the alanine racemase family. Requires pyridoxal 5'-phosphate as cofactor.

The catalysed reaction is L-alanine = D-alanine. The protein operates within amino-acid biosynthesis; D-alanine biosynthesis; D-alanine from L-alanine: step 1/1. This is Alanine racemase, catabolic (alr1) from Schizosaccharomyces pombe (strain 972 / ATCC 24843) (Fission yeast).